Consider the following 734-residue polypeptide: Origin of replication complex subunit 3 (734 aa).

Disordered stretches follow at residues Met-1–Ala-25 and Gly-532–Lys-554. Positions Gln-12–Thr-24 are enriched in polar residues.

It belongs to the ORC3 family. Component of the origin recognition complex (ORC) composed of at least ORC1 (ORC1A or ORC1B), ORC2, ORC3, ORC4, ORC5 and ORC6. ORC is regulated in a cell-cycle and development dependent manner. It is sequentially assembled at the exit from anaphase of mitosis and disassembled as cells enter S phase. Interacts directly with ORC1A, ORC2, ORC4, ORC5 and ORC6. In terms of tissue distribution, follow a cell-cycle regulation with a peak at the G1/S-phase. Mostly expressed in siliques and flowers, and, to a lower exent, in flower buds, leaves, roots and stems.

It is found in the nucleus. In terms of biological role, component of the origin recognition complex (ORC) that binds origins of replication. DNA-binding is ATP-dependent. The specific DNA sequences that define origins of replication have not been identified yet. The sequence is that of Origin of replication complex subunit 3 from Arabidopsis thaliana (Mouse-ear cress).